The chain runs to 192 residues: Adenine phosphoribosyltransferase (192 aa).

Belongs to the purine/pyrimidine phosphoribosyltransferase family. In terms of assembly, homodimer.

The protein localises to the cytoplasm. It catalyses the reaction AMP + diphosphate = 5-phospho-alpha-D-ribose 1-diphosphate + adenine. The protein operates within purine metabolism; AMP biosynthesis via salvage pathway; AMP from adenine: step 1/1. Catalyzes a salvage reaction resulting in the formation of AMP, that is energically less costly than de novo synthesis. This chain is Adenine phosphoribosyltransferase, found in Corynebacterium efficiens (strain DSM 44549 / YS-314 / AJ 12310 / JCM 11189 / NBRC 100395).